We begin with the raw amino-acid sequence, 85 residues long: Large ribosomal subunit protein bL27 (85 aa).

The segment at 1–20 (MATKKAGGSTRNGRDSEAKR) is disordered.

This sequence belongs to the bacterial ribosomal protein bL27 family.

The protein is Large ribosomal subunit protein bL27 of Glaesserella parasuis serovar 5 (strain SH0165) (Haemophilus parasuis).